A 408-amino-acid chain; its full sequence is CinA-like protein (408 aa).

The protein belongs to the CinA family.

The chain is CinA-like protein from Anaeromyxobacter dehalogenans (strain 2CP-C).